Here is a 95-residue protein sequence, read N- to C-terminus: Aspartyl/glutamyl-tRNA(Asn/Gln) amidotransferase subunit C (95 aa).

Positions 74-95 (GQALEPAPDADNEHFLVPQVVE) are disordered.

Belongs to the GatC family. As to quaternary structure, heterotrimer of A, B and C subunits.

It carries out the reaction L-glutamyl-tRNA(Gln) + L-glutamine + ATP + H2O = L-glutaminyl-tRNA(Gln) + L-glutamate + ADP + phosphate + H(+). The enzyme catalyses L-aspartyl-tRNA(Asn) + L-glutamine + ATP + H2O = L-asparaginyl-tRNA(Asn) + L-glutamate + ADP + phosphate + 2 H(+). Functionally, allows the formation of correctly charged Asn-tRNA(Asn) or Gln-tRNA(Gln) through the transamidation of misacylated Asp-tRNA(Asn) or Glu-tRNA(Gln) in organisms which lack either or both of asparaginyl-tRNA or glutaminyl-tRNA synthetases. The reaction takes place in the presence of glutamine and ATP through an activated phospho-Asp-tRNA(Asn) or phospho-Glu-tRNA(Gln). The sequence is that of Aspartyl/glutamyl-tRNA(Asn/Gln) amidotransferase subunit C from Salinibacter ruber (strain DSM 13855 / M31).